The sequence spans 461 residues: Chromosomal replication initiator protein DnaA (461 aa).

Positions 1-83 are domain I, interacts with DnaA modulators; it reads MTASLWQQCL…LHFAVGRRPT (83 aa). The segment at 83–124 is domain II; it reads TAATVQMNTAAAPVADVRIGPAITVPSWTSKQDAMPEINHKS. Residues 125 to 341 form a domain III, AAA+ region region; that stretch reads NINETYTFEN…GALNRVIANA (217 aa). 4 residues coordinate ATP: Gly-169, Gly-171, Lys-172, and Thr-173. The segment at 342–461 is domain IV, binds dsDNA; the sequence is RFTGKPINID…YSNLIRTLSS (120 aa).

Belongs to the DnaA family. In terms of assembly, oligomerizes as a right-handed, spiral filament on DNA at oriC.

The protein localises to the cytoplasm. Plays an essential role in the initiation and regulation of chromosomal replication. ATP-DnaA binds to the origin of replication (oriC) to initiate formation of the DNA replication initiation complex once per cell cycle. Binds the DnaA box (a 9 base pair repeat at the origin) and separates the double-stranded (ds)DNA. Forms a right-handed helical filament on oriC DNA; dsDNA binds to the exterior of the filament while single-stranded (ss)DNA is stabiized in the filament's interior. The ATP-DnaA-oriC complex binds and stabilizes one strand of the AT-rich DNA unwinding element (DUE), permitting loading of DNA polymerase. After initiation quickly degrades to an ADP-DnaA complex that is not apt for DNA replication. Binds acidic phospholipids. The sequence is that of Chromosomal replication initiator protein DnaA from Tolumonas auensis (strain DSM 9187 / NBRC 110442 / TA 4).